The sequence spans 136 residues: Heavy metal-associated isoprenylated plant protein 19 (136 aa).

The region spanning 13–77 (YMDVEFNVSM…LKKKTGKRVK (65 aa)) is the HMA domain. A metal cation contacts are provided by Cys-24 and Cys-27. Cys-133 carries the post-translational modification Cysteine methyl ester. A lipid anchor (S-farnesyl cysteine) is attached at Cys-133. Residues 134–136 (SIS) constitute a propeptide, removed in mature form.

It belongs to the HIPP family.

Functionally, heavy-metal-binding protein. This chain is Heavy metal-associated isoprenylated plant protein 19, found in Arabidopsis thaliana (Mouse-ear cress).